The sequence spans 509 residues: Cytochrome P450 monooxygenase fumoA (509 aa).

The chain crosses the membrane as a helical span at residues 5 to 27 (LANLNFPYLILSACLSAILLSRF). Asn317, Asn369, and Asn378 each carry an N-linked (GlcNAc...) asparagine glycan. Cys456 lines the heme pocket. Asn464 is a glycosylation site (N-linked (GlcNAc...) asparagine).

The protein belongs to the cytochrome P450 family. Heme serves as cofactor.

Its subcellular location is the membrane. Its pathway is secondary metabolite biosynthesis. Functionally, cytochrome P450 monooxygenase; part of the gene cluster that mediates the biosynthesis of fumosorinone, a 2-pyridone alkaloid that acts as an inhibitor of protein tyrosine phosphatase 1B which is implicated asa negative regulator of insulin receptor signaling and a potential drug target for the treatment of type II diabetes and other associated metabolic syndromes. The polyketide-amino acid backbone of fumosorinone is first assembled by the PKS-NRPS hybrid fumoS. The PKS modules condense one acetyl-CoA starter unit with 7 malonyl-CoA units, programmed C-methylations occurring after the first 3 and the sixth extensions, and cycles of full reduction occurring after the first 2 extensions. Because fumoS lacks a designated enoyl reductase (ER) domain, the required activity is provided the enoyl reductase fumoC. Upon formation of the polyketide backbone on the thiotemplate, the polyketide is transferred to the NRPS module and linked to tyrosine to produce the acyltetramic acid intermediate called prefumosorinone A. The cytochrome P450 monooxygenase fumoA then probably catalyzes an unprecedented oxidative ring expansion of prefumosorinone A to form prefumosorinone B which contains the 2-pyridone core of fumosorinone. The cytochrome P450 monooxygenase fumoB might hydroxylate the nitrogen of prefumosorinone B, but not the acyltetramic acid prefumosorinone A, to form fumosorinone. The sequence is that of Cytochrome P450 monooxygenase fumoA from Cordyceps fumosorosea (strain ARSEF 2679) (Isaria fumosorosea).